The chain runs to 189 residues: Interferon alpha-B (189 aa).

The first 23 residues, 1 to 23 (MAPAWSFLLALLLLSCNAICSLG), serve as a signal peptide directing secretion. 2 disulfides stabilise this stretch: Cys-24/Cys-122 and Cys-52/Cys-162.

This sequence belongs to the alpha/beta interferon family.

Its subcellular location is the secreted. Functionally, produced by macrophages, IFN-alpha have antiviral activities. Interferon stimulates the production of two enzymes: a protein kinase and an oligoadenylate synthetase. The chain is Interferon alpha-B (IFNAB) from Bos taurus (Bovine).